We begin with the raw amino-acid sequence, 471 residues long: ATP synthase subunit beta (471 aa).

156–163 (GGAGVGKT) contacts ATP.

The protein belongs to the ATPase alpha/beta chains family. In terms of assembly, F-type ATPases have 2 components, CF(1) - the catalytic core - and CF(0) - the membrane proton channel. CF(1) has five subunits: alpha(3), beta(3), gamma(1), delta(1), epsilon(1). CF(0) has three main subunits: a(1), b(2) and c(9-12). The alpha and beta chains form an alternating ring which encloses part of the gamma chain. CF(1) is attached to CF(0) by a central stalk formed by the gamma and epsilon chains, while a peripheral stalk is formed by the delta and b chains.

The protein resides in the cell membrane. The enzyme catalyses ATP + H2O + 4 H(+)(in) = ADP + phosphate + 5 H(+)(out). Its function is as follows. Produces ATP from ADP in the presence of a proton gradient across the membrane. The catalytic sites are hosted primarily by the beta subunits. The polypeptide is ATP synthase subunit beta (Lysinibacillus sphaericus (strain C3-41)).